The following is a 512-amino-acid chain: Histidine ammonia-lyase (512 aa).

The 5-imidazolinone (Ala-Gly) cross-link spans 142–144 (ASG). Ser-143 carries the post-translational modification 2,3-didehydroalanine (Ser).

The protein belongs to the PAL/histidase family. In terms of processing, contains an active site 4-methylidene-imidazol-5-one (MIO), which is formed autocatalytically by cyclization and dehydration of residues Ala-Ser-Gly.

The protein localises to the cytoplasm. The enzyme catalyses L-histidine = trans-urocanate + NH4(+). Its pathway is amino-acid degradation; L-histidine degradation into L-glutamate; N-formimidoyl-L-glutamate from L-histidine: step 1/3. The protein is Histidine ammonia-lyase of Allorhizobium ampelinum (strain ATCC BAA-846 / DSM 112012 / S4) (Agrobacterium vitis (strain S4)).